The primary structure comprises 138 residues: Chorion protein S16 (138 aa).

Residues 1-20 form the signal peptide; it reads MSATLRLLCLMACCVALAVA.

This sequence belongs to the chorion protein S16 family.

It is found in the secreted. Its function is as follows. Chorion membrane (egg shell) protein; plays a role in protecting the egg from the environment. This Drosophila melanogaster (Fruit fly) protein is Chorion protein S16 (Cp16).